The primary structure comprises 751 residues: Myb-related protein A (751 aa).

A disordered region spans residues Met1 to Glu22. HTH myb-type domains follow at residues Lys30–Leu81, Asn82–Val137, and Lys138–Val188. DNA-binding regions (H-T-H motif) lie at residues Trp58 to Leu81, Trp110 to Leu133, and Trp161 to Met184. A Glycyl lysine isopeptide (Lys-Gly) (interchain with G-Cter in SUMO2) cross-link involves residue Lys199. Positions Ile230–Ser294 are transcriptional activation domain. The interval Ser297–Pro552 is negative regulatory domain. N6-acetyllysine is present on Lys393. Residues Lys591 and Lys601 each participate in a glycyl lysine isopeptide (Lys-Gly) (interchain with G-Cter in SUMO2) cross-link.

Component of the DREAM complex (also named LINC complex) at least composed of E2F4, E2F5, LIN9, LIN37, LIN52, LIN54, MYBL1, MYBL2, RBL1, RBL2, RBBP4, TFDP1 and TFDP2. The complex exists in quiescent cells where it represses cell cycle-dependent genes. It dissociates in S phase when LIN9, LIN37, LIN52 and LIN54 form a subcomplex that binds to MYBL2. In terms of tissue distribution, predominantly in the testis. Very low levels in the ovaries, spleen and brain.

The protein localises to the nucleus. In terms of biological role, transcription factor that specifically recognizes the sequence 5'-YAAC[GT]G-3'. Acts as a master regulator of male meiosis by promoting expression of piRNAs: activates expression of both piRNA precursor RNAs and expression of protein-coding genes involved in piRNA metabolism, such as PIWIL1. The piRNA metabolic process mediates the repression of transposable elements during meiosis by forming complexes composed of piRNAs and Piwi proteins and governs the methylation and subsequent repression of transposons, which is essential for the germline integrity. Transcriptional activator of SOX30. The chain is Myb-related protein A (Mybl1) from Mus musculus (Mouse).